The sequence spans 64 residues: Temporin-ALe (64 aa).

The N-terminal stretch at 1-22 (MFTLKKSLLLLFFLGTINLSLC) is a signal peptide. The propeptide occupies 23–47 (EQERNAEEERRDEPDERNAEVEKRF). The residue at position 62 (Leu-62) is a Leucine amide.

As to expression, expressed by the skin glands.

Its subcellular location is the secreted. Antimicrobial peptide with activity against Gram-positive and Gram-negative bacteria and against fungi. Has been tested against S.aureus (MIC=1.25 ug/mL), B.pumilus (MIC=5.0 ug/mL), B.cereus (MIC=15.0 ug/mL), E.coli (MIC=1.25 ug/mL), B.dysenteriae (MIC=5.0 ug/mL), A.cacoaceticus (MIC=15.0 ug/mL), P.aeruginosa (MIC=5.0 ug/mL) and C.albicans (MIC=1.25 ug/mL). Also shows a weak hemolytic activity. This is Temporin-ALe from Amolops loloensis (Lolokou Sucker Frog).